The chain runs to 137 residues: 6,7-dimethyl-8-ribityllumazine synthase (137 aa).

Residues phenylalanine 11, 43 to 45 (SFD), and 67 to 69 (CVI) contribute to the 5-amino-6-(D-ribitylamino)uracil site. 72-73 (DT) serves as a coordination point for (2S)-2-hydroxy-3-oxobutyl phosphate. Catalysis depends on histidine 75, which acts as the Proton donor. Residue leucine 100 participates in 5-amino-6-(D-ribitylamino)uracil binding. Arginine 115 serves as a coordination point for (2S)-2-hydroxy-3-oxobutyl phosphate.

The protein belongs to the DMRL synthase family. As to quaternary structure, forms an icosahedral capsid composed of 60 subunits, arranged as a dodecamer of pentamers.

It catalyses the reaction (2S)-2-hydroxy-3-oxobutyl phosphate + 5-amino-6-(D-ribitylamino)uracil = 6,7-dimethyl-8-(1-D-ribityl)lumazine + phosphate + 2 H2O + H(+). The protein operates within cofactor biosynthesis; riboflavin biosynthesis; riboflavin from 2-hydroxy-3-oxobutyl phosphate and 5-amino-6-(D-ribitylamino)uracil: step 1/2. In terms of biological role, catalyzes the formation of 6,7-dimethyl-8-ribityllumazine by condensation of 5-amino-6-(D-ribitylamino)uracil with 3,4-dihydroxy-2-butanone 4-phosphate. This is the penultimate step in the biosynthesis of riboflavin. The protein is 6,7-dimethyl-8-ribityllumazine synthase of Methanococcus maripaludis (strain C6 / ATCC BAA-1332).